The primary structure comprises 70 residues: UPF0270 protein VV1_1320 (70 aa).

Belongs to the UPF0270 family.

This Vibrio vulnificus (strain CMCP6) protein is UPF0270 protein VV1_1320.